The sequence spans 372 residues: D-alanine--D-alanine ligase (372 aa).

One can recognise an ATP-grasp domain in the interval 145–349 (KTVLRAGGIP…CPNLLDQLIE (205 aa)). 176–231 (DRWGTSELFVKAVSLGSSVATLPVKTETEFTKAVKEVFRYDDRLMVEPRIRGREIE) is an ATP binding site. Residues aspartate 303, glutamate 316, and asparagine 318 each coordinate Mg(2+).

This sequence belongs to the D-alanine--D-alanine ligase family. Mg(2+) is required as a cofactor. Requires Mn(2+) as cofactor.

It localises to the cytoplasm. It carries out the reaction 2 D-alanine + ATP = D-alanyl-D-alanine + ADP + phosphate + H(+). It functions in the pathway cell wall biogenesis; peptidoglycan biosynthesis. Cell wall formation. The sequence is that of D-alanine--D-alanine ligase from Coxiella burnetii (strain RSA 331 / Henzerling II).